A 201-amino-acid chain; its full sequence is Recombination protein RecR (201 aa).

The C4-type zinc-finger motif lies at cysteine 56–cysteine 71. A Toprim domain is found at serine 79–proline 174.

It belongs to the RecR family.

Its function is as follows. May play a role in DNA repair. It seems to be involved in an RecBC-independent recombinational process of DNA repair. It may act with RecF and RecO. The protein is Recombination protein RecR of Cutibacterium acnes (strain DSM 16379 / KPA171202) (Propionibacterium acnes).